Here is a 344-residue protein sequence, read N- to C-terminus: Trace amine-associated receptor 8c (344 aa).

Over 1–36 (MTSNFSQATLQLCYENVNASCIKTPYSPGLRVLLYM) the chain is Extracellular. N-linked (GlcNAc...) asparagine glycosylation is found at asparagine 4 and asparagine 18. Disulfide bonds link cysteine 21–cysteine 185 and cysteine 96–cysteine 189. A helical transmembrane segment spans residues 37 to 57 (VFGFGAVLAVCGNLLVVISVL). Residues 58 to 67 (HFKQLHSPAN) are Cytoplasmic-facing. A helical membrane pass occupies residues 68 to 88 (FLIASLASADFLVGISVMPFS). Residues 89–102 (MVRSIESCWYFGDT) lie on the Extracellular side of the membrane. The helical transmembrane segment at 103 to 127 (FCSLHSCCDVAFCYSSALHLCFISV) threads the bilayer. Over 128-146 (DRYIAVTDPLVYPTKFTVS) the chain is Cytoplasmic. Residues 147-167 (VSGICISISWILPLVYSSAVF) traverse the membrane as a helical segment. Residues 168-196 (YTGISAMGIENLVSALNCVGGCQVVVNQD) lie on the Extracellular side of the membrane. Residues 197-217 (WVLISFLLFFIPTLVMIILYS) traverse the membrane as a helical segment. Residues 218–260 (KIFLVAKQQAVKIETSVSGSKGESSLESHKARVAKRERKAAKT) lie on the Cytoplasmic side of the membrane. Residues 261–281 (LGVTVLAFIVSWLPYTIDTLI) traverse the membrane as a helical segment. Residues 282–295 (DAFMGFITPAYVYE) are Extracellular-facing. A helical transmembrane segment spans residues 296–319 (FCCWSAYYNSAMNPLIYAFFYPWF). The Cytoplasmic portion of the chain corresponds to 320-344 (RKAMKLILSGKILKGHSSTTSLFSE).

The protein belongs to the G-protein coupled receptor 1 family.

It localises to the cell membrane. Its function is as follows. Olfactory receptor activated by trace amines, such as N-methylpiperidine and N,N-dimethylcyclohexylamine. Trace amine compounds are enriched in animal body fluids and act on trace amine-associated receptors (TAARs) to elicit both intraspecific and interspecific innate behaviors. Ligand-binding causes a conformation change that triggers signaling via G(s)-class of G alpha proteins (GNAL or GNAS). This is Trace amine-associated receptor 8c from Rattus norvegicus (Rat).